A 468-amino-acid chain; its full sequence is Probable Xaa-Pro aminopeptidase PEPP (468 aa).

Residues D264, D275, E398, and E438 each contribute to the Mn(2+) site.

It belongs to the peptidase M24B family. Requires Mn(2+) as cofactor.

The catalysed reaction is Release of any N-terminal amino acid, including proline, that is linked to proline, even from a dipeptide or tripeptide.. Its function is as follows. Catalyzes the removal of a penultimate prolyl residue from the N-termini of peptides. The polypeptide is Probable Xaa-Pro aminopeptidase PEPP (PEPP) (Paracoccidioides brasiliensis (strain Pb03)).